The following is a 421-amino-acid chain: Mannose-1-phosphate guanylyltransferase regulatory subunit alpha (421 aa).

Residues 2–252 form a substrate-binding domain region; it reads LKAVILIGGP…EGCWSQIKSA (251 aa). Positions 85 and 248 each coordinate GDP-alpha-D-mannose. The tract at residues 274–421 is hexapeptide repeat domain; sequence LASTKEGGPT…SRSFKNQIIL (148 aa). The C-loop stretch occupies residues 357–385; sequence TPSDPNPNDPYSKIDSETLFREGKLTPSI.

This sequence belongs to the transferase hexapeptide repeat family. As to quaternary structure, component of the GMPPA-GMPPB mannose-1-phosphate guanylyltransferase complex composed of 4 gmppa subunits and 8 gmppb subunits; the complex is organized into three layers, a central layer made up of 2 gmppa dimers sandwiched between two layers each made up of 2 gmppb dimers.

Its subcellular location is the cytoplasm. Functionally, regulatory subunit of the GMPPA-GMPPB mannose-1-phosphate guanylyltransferase complex; reduces the catalytic activity of GMPPB when part of the complex. Mediates allosteric feedback inhibition of GMPPB catalytic activity upon binding GDP-alpha-D-mannose. Together with GMPPB regulates GDP-alpha-D-mannose levels. This chain is Mannose-1-phosphate guanylyltransferase regulatory subunit alpha (gmppa), found in Xenopus tropicalis (Western clawed frog).